The following is a 372-amino-acid chain: MSSANIVPSNMGITKFLLLTISTSSVVAGVFALKPFFHINFGLHLLSHYQYWRILLWQFIYWNSTEVFQALFIIYQARDVERLLGSHRFASFCVYMFILGMFVTPIFSFLYSLLFKNLDYIQPGPTFLIFAILYQYYYIVPSTVFVRLFNIKFTDKFQMVIPMIGLAFSHFPSTFINAFLGWTMGMFYHLSLLPGTSWRLPIRFVKPALSPTHVFIRPPYSDMQNASTFNPETLFALPTGLDAERTENENQVENPVSNADANDSPTRQNARATAIASSSNTAASFRNRQQISHPPLGRTSSSSVLPTGPASQLYDMLSGRSERPELGNIREEDINTVQTIMQTSRAQAIQALSQTNDVQRAVELLLEQTADY.

5 helical membrane passes run Val26–Leu46, Ile54–Ile74, Tyr95–Phe115, Thr126–Val146, and Val160–Leu180. A disordered region spans residues Thr246–Tyr314. Polar residues predominate over residues Glu249–Gln268. Ser264 carries the phosphoserine modification. Thr266 bears the Phosphothreonine mark. Low complexity predominate over residues Asn269–Ser284. Over residues Arg286 to Leu305 the composition is skewed to polar residues. The UBA domain maps to Glu332–Gln368.

Component of the DSC E3 ubiquitin ligase complex composed of dsc1, dsc2, dsc3 and dsc4.

Its subcellular location is the golgi apparatus membrane. The enzyme catalyses S-ubiquitinyl-[E2 ubiquitin-conjugating enzyme]-L-cysteine + [acceptor protein]-L-lysine = [E2 ubiquitin-conjugating enzyme]-L-cysteine + N(6)-ubiquitinyl-[acceptor protein]-L-lysine.. Its pathway is protein modification; protein ubiquitination. In terms of biological role, component of the DSC E3 ubiquitin ligase complex which is required for the sre1 transcriptional activator proteolytic cleavage to release the soluble transcription factor from the membrane in low oxygen or sterol conditions. The complex also plays an important role in the multivesicular body (MVB) pathway and functions in a post-endoplasmic reticulum pathway for protein degradation. The protein is DSC E3 ubiquitin ligase complex subunit 2 (dsc2) of Schizosaccharomyces pombe (strain 972 / ATCC 24843) (Fission yeast).